The sequence spans 188 residues: Elongation factor P (188 aa).

It belongs to the elongation factor P family.

Its subcellular location is the cytoplasm. It participates in protein biosynthesis; polypeptide chain elongation. Involved in peptide bond synthesis. Stimulates efficient translation and peptide-bond synthesis on native or reconstituted 70S ribosomes in vitro. Probably functions indirectly by altering the affinity of the ribosome for aminoacyl-tRNA, thus increasing their reactivity as acceptors for peptidyl transferase. This Aeromonas hydrophila subsp. hydrophila (strain ATCC 7966 / DSM 30187 / BCRC 13018 / CCUG 14551 / JCM 1027 / KCTC 2358 / NCIMB 9240 / NCTC 8049) protein is Elongation factor P.